A 429-amino-acid chain; its full sequence is Small ribosomal subunit protein uS5m (429 aa).

Positions 108–127 (AGAKKGRGKRTKKKKRKDLN) are disordered. Over residues 111 to 125 (KKGRGKRTKKKKRKD) the composition is skewed to basic residues. Residues 218-282 (FDTRILEVRN…NRAVHHLYYI (65 aa)) form the S5 DRBM domain.

Belongs to the universal ribosomal protein uS5 family. As to quaternary structure, component of the mitochondrial ribosome small subunit (28S) which comprises a 12S rRNA and about 30 distinct proteins.

The protein resides in the mitochondrion. This Pongo abelii (Sumatran orangutan) protein is Small ribosomal subunit protein uS5m (MRPS5).